Reading from the N-terminus, the 194-residue chain is Histone H1.0 (194 aa).

At methionine 1 the chain carries N-acetylmethionine. The span at 1–11 shows a compositional bias: low complexity; it reads MTENSTSAPAA. The interval 1–29 is disordered; that stretch reads MTENSTSAPAAKPKRAKASKKSTDHPKYS. N-acetylthreonine; partial; in Histone H1.0, N-terminally processed is present on threonine 2. A Deamidated asparagine; partial modification is found at asparagine 4. One can recognise an H15 domain in the interval 24–97; sequence DHPKYSDMIV…GASGSFRLAK (74 aa). Residue arginine 42 is modified to Citrulline. Positions 84–194 are disordered; sequence TKGVGASGSF…SSAKRAGKKK (111 aa). Serine 104 carries the ADP-ribosylserine modification. Positions 105 to 194 are enriched in basic residues; it reads VAFKKTKKEI…SSAKRAGKKK (90 aa).

It belongs to the histone H1/H5 family. Phosphorylated on Ser-17 in RNA edited version. In terms of processing, ADP-ribosylated on Ser-104 in response to DNA damage.

Its subcellular location is the nucleus. It is found in the chromosome. In terms of biological role, histones H1 are necessary for the condensation of nucleosome chains into higher-order structures. The histones H1.0 are found in cells that are in terminal stages of differentiation or that have low rates of cell division. In Homo sapiens (Human), this protein is Histone H1.0.